The following is a 429-amino-acid chain: Adenylosuccinate synthetase (429 aa).

Residues 12–18 and 40–42 contribute to the GTP site; these read GDEGKGK and GHT. Aspartate 13 acts as the Proton acceptor in catalysis. Mg(2+) contacts are provided by aspartate 13 and glycine 40. Residues 13 to 16, 38 to 41, threonine 128, arginine 142, glutamine 223, threonine 238, and arginine 302 each bind IMP; these read DEGK and NAGH. Catalysis depends on histidine 41, which acts as the Proton donor. 298–304 contacts substrate; the sequence is TTTGRPR. GTP contacts are provided by residues arginine 304, 330–332, and 412–414; these read SID and SVG.

The protein belongs to the adenylosuccinate synthetase family. As to quaternary structure, homodimer. It depends on Mg(2+) as a cofactor.

Its subcellular location is the cytoplasm. It carries out the reaction IMP + L-aspartate + GTP = N(6)-(1,2-dicarboxyethyl)-AMP + GDP + phosphate + 2 H(+). It functions in the pathway purine metabolism; AMP biosynthesis via de novo pathway; AMP from IMP: step 1/2. Plays an important role in the de novo pathway of purine nucleotide biosynthesis. Catalyzes the first committed step in the biosynthesis of AMP from IMP. The polypeptide is Adenylosuccinate synthetase (Bacillus cytotoxicus (strain DSM 22905 / CIP 110041 / 391-98 / NVH 391-98)).